We begin with the raw amino-acid sequence, 180 residues long: ATP-dependent protease subunit HslV (180 aa).

Thr-2 is an active-site residue. Positions 158, 161, and 164 each coordinate Na(+).

This sequence belongs to the peptidase T1B family. HslV subfamily. As to quaternary structure, a double ring-shaped homohexamer of HslV is capped on each side by a ring-shaped HslU homohexamer. The assembly of the HslU/HslV complex is dependent on binding of ATP.

It localises to the cytoplasm. It catalyses the reaction ATP-dependent cleavage of peptide bonds with broad specificity.. Its activity is regulated as follows. Allosterically activated by HslU binding. Its function is as follows. Protease subunit of a proteasome-like degradation complex believed to be a general protein degrading machinery. In Baumannia cicadellinicola subsp. Homalodisca coagulata, this protein is ATP-dependent protease subunit HslV.